We begin with the raw amino-acid sequence, 900 residues long: Bifunctional uridylyltransferase/uridylyl-removing enzyme (900 aa).

The uridylyltransferase stretch occupies residues 1–342 (MPQVDPELFD…PCEQPVQIQP (342 aa)). Residues 343–705 (LNSRFQLRDG…TTQREFESGS (363 aa)) form a uridylyl-removing region. The HD domain maps to 461–583 (VDAHTLNLIK…VGDQTHLDYL (123 aa)). 2 ACT domains span residues 706–789 (QIFI…IIQR) and 816–891 (VLEV…DNGR).

This sequence belongs to the GlnD family. Mg(2+) is required as a cofactor.

The catalysed reaction is [protein-PII]-L-tyrosine + UTP = [protein-PII]-uridylyl-L-tyrosine + diphosphate. It carries out the reaction [protein-PII]-uridylyl-L-tyrosine + H2O = [protein-PII]-L-tyrosine + UMP + H(+). Uridylyltransferase (UTase) activity is inhibited by glutamine, while glutamine activates uridylyl-removing (UR) activity. In terms of biological role, modifies, by uridylylation and deuridylylation, the PII regulatory proteins (GlnB and homologs), in response to the nitrogen status of the cell that GlnD senses through the glutamine level. Under low glutamine levels, catalyzes the conversion of the PII proteins and UTP to PII-UMP and PPi, while under higher glutamine levels, GlnD hydrolyzes PII-UMP to PII and UMP (deuridylylation). Thus, controls uridylylation state and activity of the PII proteins, and plays an important role in the regulation of nitrogen assimilation and metabolism. This Pseudomonas aeruginosa (strain UCBPP-PA14) protein is Bifunctional uridylyltransferase/uridylyl-removing enzyme.